Reading from the N-terminus, the 160-residue chain is Protransforming growth factor alpha (160 aa).

Residues 1–23 form the signal peptide; it reads MVPSAGQFALFALGILLAVCQAL. Positions 24-39 are cleaved as a propeptide — removed in mature form; the sequence is ENSTSALSADPPIAAA. At 24 to 98 the chain is on the extracellular side; that stretch reads ENSTSALSAD…AVVAASQKKQ (75 aa). Residue Asn-25 is glycosylated (N-linked (GlcNAc...) asparagine). Residues 43–83 enclose the EGF-like domain; the sequence is HFNDCPDSHSQFCFHGTCRFLVQEDKPACVCHSGYVGARCE. 3 cysteine pairs are disulfide-bonded: Cys-47-Cys-60, Cys-55-Cys-71, and Cys-73-Cys-82. Positions 90-160 are cleaved as a propeptide — removed in mature form; sequence VVAASQKKQA…TACCHSETVV (71 aa). A helical transmembrane segment spans residues 99–124; sequence AITALVVVSIVALAVLIITCVLIHCC. The Cytoplasmic segment spans residues 125–160; sequence QVRKHCEWCRALICRHEKPSALLKGRTACCHSETVV. S-palmitoyl cysteine attachment occurs at residues Cys-153 and Cys-154.

Interacts with the PDZ domains of MAGI3, SDCBP and SNTA1. The interaction with SDCBP, is required for the targeting to the cell surface. In the endoplasmic reticulum, in its immature form (i.e. with a prosegment and lacking full N-glycosylation), interacts with CNIH. In the Golgi apparatus, may form a complex with CNIH and GORASP2. Interacts (via cytoplasmic C-terminal domain) with NKD2.

Its subcellular location is the secreted. It localises to the extracellular space. It is found in the cell membrane. TGF alpha is a mitogenic polypeptide that is able to bind to the EGF receptor/EGFR and to act synergistically with TGF beta to promote anchorage-independent cell proliferation in soft agar. The protein is Protransforming growth factor alpha (TGFA) of Sus scrofa (Pig).